Reading from the N-terminus, the 61-residue chain is Small ribosomal subunit protein uS14 (61 aa).

The Zn(2+) site is built by C24, C27, C40, and C43.

This sequence belongs to the universal ribosomal protein uS14 family. Zinc-binding uS14 subfamily. As to quaternary structure, part of the 30S ribosomal subunit. Contacts proteins S3 and S10. Zn(2+) is required as a cofactor.

Binds 16S rRNA, required for the assembly of 30S particles and may also be responsible for determining the conformation of the 16S rRNA at the A site. The protein is Small ribosomal subunit protein uS14 of Clostridium novyi (strain NT).